Consider the following 695-residue polypeptide: Cysteine-rich receptor-like protein kinase 6 (695 aa).

The signal sequence occupies residues 1–31 (MRRHRPYLDGVAAAAATFLLAVLLHAPLAAG). Over 32 to 294 (EDEPPPWVLC…ATSGEKTKNR (263 aa)) the chain is Extracellular. 2 consecutive Gnk2-homologous domains span residues 38 to 142 (WVLC…NRDF) and 151 to 261 (TTYT…VFPF). N-linked (GlcNAc...) asparagine glycans are attached at residues asparagine 49, asparagine 53, asparagine 70, and asparagine 101. Disulfide bonds link cysteine 96–cysteine 105 and cysteine 108–cysteine 133. N-linked (GlcNAc...) asparagine glycosylation is present at asparagine 178. 2 disulfide bridges follow: cysteine 215–cysteine 224 and cysteine 227–cysteine 252. Residues 295–315 (IGTVLAIVMPAIAAILLMVVA) traverse the membrane as a helical segment. Topologically, residues 316–695 (CFCCWKRIKK…DLSITELVPR (380 aa)) are cytoplasmic. One can recognise a Protein kinase domain in the interval 363–634 (FADTKMIGQG…PTISSVNIML (272 aa)). Residues 369 to 377 (IGQGGFGMV) and lysine 391 each bind ATP. The active-site Proton acceptor is aspartate 488. The tract at residues 658 to 682 (DSSNPYSERYPRPRHSGYSDNSTVV) is disordered.

It belongs to the protein kinase superfamily. Ser/Thr protein kinase family. CRK subfamily.

The protein localises to the membrane. Functionally, involved in disease resistance. Required for NPR1/NH1-mediated immunity to the bacterial blight pathogen Xanthomomas oryzae pv. oryzae (Xoo). Required for the benzothiadiazole (BTH)-induced immune response. Possesses kinase activity in vitro. The protein is Cysteine-rich receptor-like protein kinase 6 of Oryza sativa subsp. japonica (Rice).